Consider the following 216-residue polypeptide: Peroxiredoxin (216 aa).

Positions 2 to 158 constitute a Thioredoxin domain; it reads IVIGEKFPEV…ILRLVKALKI (157 aa). Cys-46 (cysteine sulfenic acid (-SOH) intermediate) is an active-site residue. Arg-121 provides a ligand contact to substrate. A disulfide bond links Cys-205 and Cys-211.

It belongs to the peroxiredoxin family. Prx6 subfamily. Homodecamer. Pentamer of dimers that assemble into a ring structure.

It localises to the cytoplasm. The catalysed reaction is a hydroperoxide + [thioredoxin]-dithiol = an alcohol + [thioredoxin]-disulfide + H2O. Functionally, thiol-specific peroxidase that catalyzes the reduction of hydrogen peroxide and organic hydroperoxides to water and alcohols, respectively. Plays a role in cell protection against oxidative stress by detoxifying peroxides. This is Peroxiredoxin from Pyrococcus furiosus (strain ATCC 43587 / DSM 3638 / JCM 8422 / Vc1).